The following is a 96-amino-acid chain: Putative pterin-4-alpha-carbinolamine dehydratase (96 aa).

It belongs to the pterin-4-alpha-carbinolamine dehydratase family.

It carries out the reaction (4aS,6R)-4a-hydroxy-L-erythro-5,6,7,8-tetrahydrobiopterin = (6R)-L-erythro-6,7-dihydrobiopterin + H2O. This is Putative pterin-4-alpha-carbinolamine dehydratase from Rhodospirillum rubrum (strain ATCC 11170 / ATH 1.1.1 / DSM 467 / LMG 4362 / NCIMB 8255 / S1).